Here is a 346-residue protein sequence, read N- to C-terminus: Uroporphyrinogen decarboxylase (346 aa).

Residues 23 to 27 (RQAGR), D72, Y149, T204, and H318 each bind substrate.

Belongs to the uroporphyrinogen decarboxylase family. As to quaternary structure, homodimer.

The protein resides in the cytoplasm. The enzyme catalyses uroporphyrinogen III + 4 H(+) = coproporphyrinogen III + 4 CO2. It participates in porphyrin-containing compound metabolism; protoporphyrin-IX biosynthesis; coproporphyrinogen-III from 5-aminolevulinate: step 4/4. Functionally, catalyzes the decarboxylation of four acetate groups of uroporphyrinogen-III to yield coproporphyrinogen-III. This Synechococcus sp. (strain JA-2-3B'a(2-13)) (Cyanobacteria bacterium Yellowstone B-Prime) protein is Uroporphyrinogen decarboxylase.